The sequence spans 495 residues: E3 ubiquitin-protein ligase RAD18 (495 aa).

N-acetylmethionine is present on M1. The segment at 25–64 adopts an RING-type zinc-finger fold; that stretch reads CGICFEYFNIAMIIPQCSHNYCSLCIRKFLSYKTQCPTCC. A phosphoserine mark is found at S99 and S103. Phosphothreonine is present on T118. Residues S122, S125, S142, S158, and S164 each carry the phosphoserine modification. The tract at residues 152–197 is disordered; that stretch reads ENKSKFSPQKEASPAAKTKETRSVEEIAPDPSEAKRPEPPSTSTLK. A UBZ4-type zinc finger spans residues 201–228; the sequence is KVDCPVCGVNIPESHINKHLDSCLSREE. C204, C207, H219, and C223 together coordinate Zn(2+). Positions 232–240 match the LR motif motif; that stretch reads SLRSSVHKR. The SAP domain maps to 248 to 282; the sequence is YNLLSDRDLKKKLKEHGLSIQGNKQQLIKRHQEFV. S322 is modified (phosphoserine). K376 participates in a covalent cross-link: Glycyl lysine isopeptide (Lys-Gly) (interchain with G-Cter in SUMO2). Disordered regions lie at residues 400-423 and 456-495; these read NHFS…DSSS and AWEA…RNRN. Residues 410-421 are compositionally biased toward acidic residues; the sequence is PEELEPDREEDS. S471 and S483 each carry phosphoserine. The span at 479–495 shows a compositional bias: basic and acidic residues; the sequence is RAAESAEIEPRNKRNRN.

The protein belongs to the RAD18 family. Homodimer. Interacts with UBE2A and UBE2B, one homodimer binding one molecule of UBE2B. Interacts with SHPRH. Interacts with HLTF. Interacts with SPRTN; leading to enhance chromatin association of RAD18 and RAD18-mediated PCNA ubiquitination and translesion DNA synthesis. Interacts (via C-terminus and phosphorylated form) with SLF1 (via BRCT domains); this interaction is required for efficient repair of UV-induced DNA damage. Interacts with SLF2. Interacts with SMC5; this interaction is increased in a SLF1 or SLF2-dependent manner. Interacts with DNA damage up-regulated protein DDUP. Forms a complex with DDUP and H2AX following DDUP phosphorylation.

It is found in the nucleus. The protein resides in the cytoplasm. It localises to the cytoskeleton. The protein localises to the microtubule organizing center. Its subcellular location is the centrosome. The catalysed reaction is S-ubiquitinyl-[E2 ubiquitin-conjugating enzyme]-L-cysteine + [acceptor protein]-L-lysine = [E2 ubiquitin-conjugating enzyme]-L-cysteine + N(6)-ubiquitinyl-[acceptor protein]-L-lysine.. It functions in the pathway protein modification; protein ubiquitination. E3 ubiquitin-protein ligase involved in postreplication repair of UV-damaged DNA. Postreplication repair functions in gap-filling of a daughter strand on replication of damaged DNA. Associates to the E2 ubiquitin conjugating enzyme UBE2B to form the UBE2B-RAD18 ubiquitin ligase complex involved in mono-ubiquitination of DNA-associated PCNA on 'Lys-164'. Has ssDNA binding activity. This chain is E3 ubiquitin-protein ligase RAD18 (RAD18), found in Homo sapiens (Human).